A 115-amino-acid polypeptide reads, in one-letter code: Large ribosomal subunit protein uL22 (115 aa).

Belongs to the universal ribosomal protein uL22 family. Part of the 50S ribosomal subunit.

Functionally, this protein binds specifically to 23S rRNA; its binding is stimulated by other ribosomal proteins, e.g. L4, L17, and L20. It is important during the early stages of 50S assembly. It makes multiple contacts with different domains of the 23S rRNA in the assembled 50S subunit and ribosome. The globular domain of the protein is located near the polypeptide exit tunnel on the outside of the subunit, while an extended beta-hairpin is found that lines the wall of the exit tunnel in the center of the 70S ribosome. The polypeptide is Large ribosomal subunit protein uL22 (Streptomyces griseus subsp. griseus (strain JCM 4626 / CBS 651.72 / NBRC 13350 / KCC S-0626 / ISP 5235)).